A 37-amino-acid chain; its full sequence is uncharacterized protein (37 aa).

The segment at 1 to 37 (MGQVEKARQGQFARPHHSDSQRRVRAWSRIQRRARSF) is disordered. A compositionally biased stretch (basic residues) spans 23 to 37 (RVRAWSRIQRRARSF).

This is an uncharacterized protein from Bacillus phage phi105 (Bacteriophage phi-105).